The sequence spans 732 residues: MGRKEDNIEKALRIVEHTELVRNIGIVAHIDHGKTTLSDNLIAGAGMMSEELAGKQLVLDYDEQEQARGITINAAVASMVHAFQGKEYLINLIDTPGHVDFGGDVTRAMRAVDGVIVVVDSVEGVMPQTETVIRQALREYVKPVLFINKIDRLINELRLNSDEMQKRFTKIISDVNKLISKYAPKEFTKEWQVSVQDGKVAFGSAYNNWAISVPSMAETKITFKDIVEYVKNGKQKELAQKNQLHKIILNMVIRHLPDPKTAQSYRIKQIWKGDLETEVGKSMVSCDFKGPVAMMVTKIIIDPHAGEIAIGRLFSGTVKKGTDLYISGDGKGKVQTLAMMVGPDRIPVEEVTAGNIAAIVGLKGAIAGSTVSSIENMEPFEPMIHYSEPVVTLAIEAKHTADLPRLIDVLRDISKADPSIQVDINQETGEHLISGMGELHLDVTLYRIKNDYKIEVETSEPIVVYRETVEKKGGPFEGKSPNKHNRFYFEVEPLKPEVIQAIEDGDIPQGSKFKDKKTIIETLVSKGIDREEARGLVCVEGTNIMFDVTRGIQYLDETMELLIEAFTEVMNRGPLANEKVFGVKARLVDAKLHEDSIHRGPAQVIPAGRNSIYGAMCEAKRILLEPVQKVFINVPQEEMGSAINEVQQRRGVIEDMTQEGEEVSLVARIPVSGMFGFASAIRSATGGKVLWSFENAGYQKVPPELQDSVVRSIRERKGLRPEPYDADYYASM.

Residues 19–228 (ELVRNIGIVA…TKITFKDIVE (210 aa)) form the tr-type G domain. Residues 28–35 (AHIDHGKT), 94–98 (DTPGH), and 148–151 (NKID) contribute to the GTP site. His598 bears the Diphthamide mark.

The protein belongs to the TRAFAC class translation factor GTPase superfamily. Classic translation factor GTPase family. EF-G/EF-2 subfamily.

The protein localises to the cytoplasm. Its function is as follows. Catalyzes the GTP-dependent ribosomal translocation step during translation elongation. During this step, the ribosome changes from the pre-translocational (PRE) to the post-translocational (POST) state as the newly formed A-site-bound peptidyl-tRNA and P-site-bound deacylated tRNA move to the P and E sites, respectively. Catalyzes the coordinated movement of the two tRNA molecules, the mRNA and conformational changes in the ribosome. The protein is Elongation factor 2 of Thermoplasma volcanium (strain ATCC 51530 / DSM 4299 / JCM 9571 / NBRC 15438 / GSS1).